The following is a 317-amino-acid chain: Enoyl-CoA delta isomerase 3, peroxisomal (317 aa).

The ACB domain occupies 1 to 46; it reads MPKPGVFNFVNKATWDARNALGSLPKETARKNYVDLVSSLSSSSEA. The interval 40-60 is disordered; the sequence is LSSSSEAPSQGKRGADEKARE. 120–124 provides a ligand contact to substrate; that stretch reads SGNDL. Positions 315-317 match the Microbody targeting signal motif; it reads AKL.

Belongs to the enoyl-CoA hydratase/isomerase family. As to expression, expressed at high levels in the kidney. Also detected at very low levels in the duodenum, jejunum, ileum, heart, liver, lung, and brown adipose tissue (at protein level). In the kidney, expression seems to be localized mainly to the proximal tubule.

The protein localises to the peroxisome. The catalysed reaction is a (3Z)-enoyl-CoA = a 4-saturated (2E)-enoyl-CoA. It catalyses the reaction a (3E)-enoyl-CoA = a 4-saturated (2E)-enoyl-CoA. It carries out the reaction (3E)-nonenoyl-CoA = (2E)-nonenoyl-CoA. Its function is as follows. Catalyzes the isomerization of trans-3-nonenoyl-CoA into trans-2-nonenoyl-CoA. May also have activity towards other enoyl-CoA species. The polypeptide is Enoyl-CoA delta isomerase 3, peroxisomal (Mus musculus (Mouse)).